The chain runs to 966 residues: DNA mismatch repair protein MutS (966 aa).

An ATP-binding site is contributed by 709 to 716 (GPNMAGKS). The segment at 894-914 (EGQRPPSSPAQPPAPPAPVVV) is disordered. A compositionally biased stretch (pro residues) spans 899–912 (PSSPAQPPAPPAPV).

Belongs to the DNA mismatch repair MutS family.

Functionally, this protein is involved in the repair of mismatches in DNA. It is possible that it carries out the mismatch recognition step. This protein has a weak ATPase activity. This chain is DNA mismatch repair protein MutS, found in Chloroflexus aurantiacus (strain ATCC 29366 / DSM 635 / J-10-fl).